The chain runs to 447 residues: Folate synthesis bifunctional protein (447 aa).

The tract at residues Met-1 to Pro-165 is HPPK. Residues Thr-179–Ser-438 form the Pterin-binding domain. The tract at residues Leu-181–Val-447 is DHPS. Asn-186 lines the Mg(2+) pocket. (7,8-dihydropterin-6-yl)methyl diphosphate-binding positions include Thr-226, Asp-266, Asn-286, Asp-356, Lys-392, and Arg-426 to His-428.

In the C-terminal section; belongs to the DHPS family. The protein in the N-terminal section; belongs to the HPPK family. The cofactor is Mg(2+).

It carries out the reaction 6-hydroxymethyl-7,8-dihydropterin + ATP = (7,8-dihydropterin-6-yl)methyl diphosphate + AMP + H(+). The enzyme catalyses (7,8-dihydropterin-6-yl)methyl diphosphate + 4-aminobenzoate = 7,8-dihydropteroate + diphosphate. It participates in cofactor biosynthesis; tetrahydrofolate biosynthesis; 2-amino-4-hydroxy-6-hydroxymethyl-7,8-dihydropteridine diphosphate from 7,8-dihydroneopterin triphosphate: step 4/4. The protein operates within cofactor biosynthesis; tetrahydrofolate biosynthesis; 7,8-dihydrofolate from 2-amino-4-hydroxy-6-hydroxymethyl-7,8-dihydropteridine diphosphate and 4-aminobenzoate: step 1/2. This chain is Folate synthesis bifunctional protein (folKP), found in Chlamydia caviae (strain ATCC VR-813 / DSM 19441 / 03DC25 / GPIC) (Chlamydophila caviae).